The chain runs to 414 residues: Putative competence-damage inducible protein (414 aa).

Belongs to the CinA family.

This Listeria monocytogenes serovar 1/2a (strain ATCC BAA-679 / EGD-e) protein is Putative competence-damage inducible protein.